Here is a 382-residue protein sequence, read N- to C-terminus: Alcohol dehydrogenase 1 (382 aa).

Residues Cys-49, Thr-51, His-71, Cys-101, Cys-104, Cys-107, Cys-115, and Cys-179 each coordinate Zn(2+). An alcohol is bound by residues Thr-51 and His-71. Thr-51 provides a ligand contact to NAD(+). Residues Gly-204–Gly-209, Asp-228, Arg-233, Thr-275, Val-298, Val-298–Val-300, Phe-325, and Arg-375 each bind NAD(+).

This sequence belongs to the zinc-containing alcohol dehydrogenase family. Homodimer. Requires Zn(2+) as cofactor.

It localises to the cytoplasm. The catalysed reaction is a primary alcohol + NAD(+) = an aldehyde + NADH + H(+). It carries out the reaction a secondary alcohol + NAD(+) = a ketone + NADH + H(+). This protein is responsible for the conversion of alcohols to aldehydes in plants and is important for NAD metabolism during anaerobic respiration. In Petunia hybrida (Petunia), this protein is Alcohol dehydrogenase 1 (ADH1).